A 645-amino-acid polypeptide reads, in one-letter code: Cilia- and flagella-associated protein 221 homolog (645 aa).

Residues 381–408 (GGAVHQPSAPVGSSSSGGGGGSDPAFKP) form a disordered region. Positions 428 to 435 (THQRLQRR) are interaction with calmodulin.

Belongs to the PCDP1 family. Interacts with calmodulin; calcium-dependent. Part of the PDCP1 complex composed of CFAP46, CFAP54, CFAP74 and CFAP221; the PDCP1 complex binds calmodulin.

The protein resides in the cytoplasm. The protein localises to the cytoskeleton. It localises to the cilium axoneme. In terms of biological role, may play a role in cilium morphogenesis. The sequence is that of Cilia- and flagella-associated protein 221 homolog from Chlamydomonas reinhardtii (Chlamydomonas smithii).